A 258-amino-acid polypeptide reads, in one-letter code: GTP cyclohydrolase FolE2 (258 aa).

The protein belongs to the GTP cyclohydrolase IV family.

The catalysed reaction is GTP + H2O = 7,8-dihydroneopterin 3'-triphosphate + formate + H(+). Its pathway is cofactor biosynthesis; 7,8-dihydroneopterin triphosphate biosynthesis; 7,8-dihydroneopterin triphosphate from GTP: step 1/1. Converts GTP to 7,8-dihydroneopterin triphosphate. This is GTP cyclohydrolase FolE2 from Pseudothermotoga lettingae (strain ATCC BAA-301 / DSM 14385 / NBRC 107922 / TMO) (Thermotoga lettingae).